The sequence spans 188 residues: Adenine phosphoribosyltransferase (188 aa).

The protein belongs to the purine/pyrimidine phosphoribosyltransferase family. As to quaternary structure, homodimer.

The protein resides in the cytoplasm. The enzyme catalyses AMP + diphosphate = 5-phospho-alpha-D-ribose 1-diphosphate + adenine. The protein operates within purine metabolism; AMP biosynthesis via salvage pathway; AMP from adenine: step 1/1. In terms of biological role, catalyzes a salvage reaction resulting in the formation of AMP, that is energically less costly than de novo synthesis. This Frankia casuarinae (strain DSM 45818 / CECT 9043 / HFP020203 / CcI3) protein is Adenine phosphoribosyltransferase.